The following is a 220-amino-acid chain: GTP cyclohydrolase 1 (220 aa).

Residues cysteine 109, histidine 112, and cysteine 180 each coordinate Zn(2+).

The protein belongs to the GTP cyclohydrolase I family. In terms of assembly, homomer.

It carries out the reaction GTP + H2O = 7,8-dihydroneopterin 3'-triphosphate + formate + H(+). Its pathway is cofactor biosynthesis; 7,8-dihydroneopterin triphosphate biosynthesis; 7,8-dihydroneopterin triphosphate from GTP: step 1/1. The chain is GTP cyclohydrolase 1 from Pectobacterium carotovorum subsp. carotovorum (strain PC1).